Consider the following 77-residue polypeptide: Protein RADIALIS-like 4 (77 aa).

The 56-residue stretch at 6 to 61 (MSTSSWTAREDKQFEMALAKFDKDTPDRWQKIARAVGGKSTEEVKRHYELLLRDVN) folds into the SANT domain.

In terms of tissue distribution, expressed just outside the vascular bundles in the rosette stem and the leaf traces. Not detected in floral primordia.

The protein resides in the nucleus. Probable transcription factor. In Arabidopsis thaliana (Mouse-ear cress), this protein is Protein RADIALIS-like 4 (RL4).